Here is a 131-residue protein sequence, read N- to C-terminus: Phosphoribosyl-AMP cyclohydrolase (131 aa).

Residue D89 coordinates Mg(2+). Position 90 (C90) interacts with Zn(2+). Mg(2+) is bound by residues D91 and D93. 2 residues coordinate Zn(2+): C106 and C113.

The protein belongs to the PRA-CH family. Homodimer. The cofactor is Mg(2+). Zn(2+) is required as a cofactor.

It is found in the cytoplasm. It carries out the reaction 1-(5-phospho-beta-D-ribosyl)-5'-AMP + H2O = 1-(5-phospho-beta-D-ribosyl)-5-[(5-phospho-beta-D-ribosylamino)methylideneamino]imidazole-4-carboxamide. It functions in the pathway amino-acid biosynthesis; L-histidine biosynthesis; L-histidine from 5-phospho-alpha-D-ribose 1-diphosphate: step 3/9. Catalyzes the hydrolysis of the adenine ring of phosphoribosyl-AMP. This Pyrobaculum aerophilum (strain ATCC 51768 / DSM 7523 / JCM 9630 / CIP 104966 / NBRC 100827 / IM2) protein is Phosphoribosyl-AMP cyclohydrolase.